The sequence spans 403 residues: Poly(rC)-binding protein 4 (403 aa).

KH domains are found at residues 17–67 (TLTL…TITG), 101–154 (PVTL…TVSG), and 241–293 (TSSQ…TITG).

As to expression, widely expressed, with highest levels in testis and lowest in heart.

It localises to the cytoplasm. In terms of biological role, single-stranded nucleic acid binding protein that binds preferentially to oligo dC. The polypeptide is Poly(rC)-binding protein 4 (Pcbp4) (Mus musculus (Mouse)).